A 424-amino-acid polypeptide reads, in one-letter code: Glutamyl-tRNA reductase (424 aa).

Substrate is bound by residues 49–52, S105, 110–112, and Q116; these read TCNR and EPQ. Catalysis depends on C50, which acts as the Nucleophile. NADP(+) is bound at residue 185-190; it reads GSGETA.

This sequence belongs to the glutamyl-tRNA reductase family. Homodimer.

It catalyses the reaction (S)-4-amino-5-oxopentanoate + tRNA(Glu) + NADP(+) = L-glutamyl-tRNA(Glu) + NADPH + H(+). It participates in porphyrin-containing compound metabolism; protoporphyrin-IX biosynthesis; 5-aminolevulinate from L-glutamyl-tRNA(Glu): step 1/2. Its function is as follows. Catalyzes the NADPH-dependent reduction of glutamyl-tRNA(Glu) to glutamate 1-semialdehyde (GSA). The sequence is that of Glutamyl-tRNA reductase from Legionella pneumophila (strain Paris).